The chain runs to 101 residues: Small ribosomal subunit protein uS14 (101 aa).

This sequence belongs to the universal ribosomal protein uS14 family. As to quaternary structure, part of the 30S ribosomal subunit. Contacts proteins S3 and S10.

Its function is as follows. Binds 16S rRNA, required for the assembly of 30S particles and may also be responsible for determining the conformation of the 16S rRNA at the A site. This chain is Small ribosomal subunit protein uS14, found in Salmonella paratyphi A (strain ATCC 9150 / SARB42).